A 297-amino-acid chain; its full sequence is 33 kDa chaperonin (297 aa).

Disulfide bonds link cysteine 239-cysteine 241 and cysteine 272-cysteine 275.

It belongs to the HSP33 family. In terms of processing, under oxidizing conditions two disulfide bonds are formed involving the reactive cysteines. Under reducing conditions zinc is bound to the reactive cysteines and the protein is inactive.

The protein resides in the cytoplasm. Functionally, redox regulated molecular chaperone. Protects both thermally unfolding and oxidatively damaged proteins from irreversible aggregation. Plays an important role in the bacterial defense system toward oxidative stress. This Synechococcus elongatus (strain ATCC 33912 / PCC 7942 / FACHB-805) (Anacystis nidulans R2) protein is 33 kDa chaperonin.